The sequence spans 591 residues: N-acetylgalactosaminyltransferase 7 (591 aa).

Over 1–11 (MRVSTIRSGRI) the chain is Cytoplasmic. The chain crosses the membrane as a helical; Signal-anchor for type II membrane protein span at residues 12-29 (CRLALCLLVLLPLLYLLA). A glycan (N-linked (GlcNAc...) asparagine) is linked at asparagine 30. Over 30–591 (NWSDHHKRVQ…WWFKEIRPRW (562 aa)) the chain is Lumenal. The disordered stretch occupies residues 68-100 (DGLGNFEPKDVKPRSGPGENGEAHSLSPDKKHM). Intrachain disulfides connect cysteine 132-cysteine 367, cysteine 358-cysteine 441, cysteine 479-cysteine 496, cysteine 519-cysteine 532, and cysteine 558-cysteine 573. The tract at residues 141 to 251 (LPRTSVIIVF…TNWLPPLLAP (111 aa)) is catalytic subdomain A. Substrate is bound by residues aspartate 182 and arginine 212. Mn(2+) is bound by residues aspartate 235 and histidine 237. Residues 313–375 (PYRSPTHAGG…PCSRVGHVYR (63 aa)) are catalytic subdomain B. Tryptophan 344 is a substrate binding site. Histidine 372 is a binding site for Mn(2+). Arginine 375 and tyrosine 380 together coordinate substrate. The Ricin B-type lectin domain maps to 466-585 (LHWGELRSVA…NDSYQQWWFK (120 aa)). N-linked (GlcNAc...) asparagine glycosylation is present at asparagine 576.

Belongs to the glycosyltransferase 2 family. GalNAc-T subfamily. It depends on Mn(2+) as a cofactor. As to expression, expressed in developing oocytes and egg chambers. During embryonic stages 9-11, expressed in the primordium of the foregut, midgut and hindgut. Expressed in the salivary glands from embryonic stage 12 onwards. During embryonic stages 12-13, expressed in the posterior midgut and hindgut. During embryonic stages 14-15, expression continues in the hindgut. During embryonic stages 16-17, expressed in the antennomaxillary complex. In third instar larvae, ubiquitously expressed in wing, with increased expression in the notum and ventral wing pouch, eye-antennal, leg and haltere imaginal disks.

The protein resides in the golgi apparatus membrane. The enzyme catalyses L-seryl-[protein] + UDP-N-acetyl-alpha-D-galactosamine = a 3-O-[N-acetyl-alpha-D-galactosaminyl]-L-seryl-[protein] + UDP + H(+). The catalysed reaction is L-threonyl-[protein] + UDP-N-acetyl-alpha-D-galactosamine = a 3-O-[N-acetyl-alpha-D-galactosaminyl]-L-threonyl-[protein] + UDP + H(+). It participates in protein modification; protein glycosylation. Glycopeptide transferase involved in O-linked oligosaccharide biosynthesis, which catalyzes the transfer of an N-acetyl-D-galactosamine residue to an already glycosylated peptide. In contrast to other proteins of the family, it does not act as a peptide transferase that transfers GalNAc onto serine or threonine residue on the protein receptor, but instead requires the prior addition of a GalNAc on a peptide before adding additional GalNAc moieties. Some peptide transferase activity is however not excluded, considering that its appropriate peptide substrate may remain unidentified. Prefers the monoglycosylated Muc5AC-3 as substrate. Might have a role in protein O-glycosylation in the Golgi and thereby in establishing and/or maintaining a proper secretory apparatus structure. The polypeptide is N-acetylgalactosaminyltransferase 7 (Drosophila melanogaster (Fruit fly)).